Consider the following 255-residue polypeptide: Probable cyclic nucleotide phosphodiesterase syc0937_d (255 aa).

The Fe cation site is built by Asp19, His21, Asp59, Asn89, His157, His196, and His198. AMP contacts are provided by residues His21, Asp59, and 89-90 (NH). An AMP-binding site is contributed by His198.

The protein belongs to the cyclic nucleotide phosphodiesterase class-III family. Fe(2+) is required as a cofactor.

In Synechococcus sp. (strain ATCC 27144 / PCC 6301 / SAUG 1402/1) (Anacystis nidulans), this protein is Probable cyclic nucleotide phosphodiesterase syc0937_d.